We begin with the raw amino-acid sequence, 1269 residues long: Rho GTPase-activating protein 29 (1269 aa).

A phosphoserine mark is found at S171, S176, S179, and S190. An F-BAR domain is found at 192–462; that stretch reads IELDSMLLKN…SAKLYDPGQE (271 aa). The stretch at 296 to 418 forms a coiled coil; it reads RKNEMEKQRK…EILTQLRKLV (123 aa). Disordered regions lie at residues 472–523 and 540–599; these read SAEE…NSAD and DSES…NSLG. A phosphoserine mark is found at S499, S519, and S552. Residues 540-559 show a composition bias toward low complexity; it reads DSESTGGSSESRSLDSESIS. The segment at 612–657 adopts a Phorbol-ester/DAG-type zinc-finger fold; it reads THKFRKLRSPTKCRDCEGIVVFHGVECEECLLVCHRKCLENLVIIC. Positions 671-886 constitute a Rho-GAP domain; the sequence is AEFTQVAKKE…FLITYSQKIF (216 aa). Residues 909 to 936 form a disordered region; it reads PGYLPKSLLSPEERDPERSMKSLFFSSK. S918 carries the phosphoserine modification. Residues 919–928 are compositionally biased toward basic and acidic residues; that stretch reads PEERDPERSM. S954 and S1026 each carry phosphoserine. The disordered stretch occupies residues 1120 to 1269; sequence RSSGDHPVSI…DLEDEIPQFV (150 aa). Polar residues predominate over residues 1128–1145; that stretch reads SITQPSKPYTEPVRSTRQ. 2 positions are modified to phosphoserine: S1152 and S1154. Positions 1162–1172 are enriched in polar residues; sequence TPRTLQPQHWT. Basic and acidic residues predominate over residues 1229 to 1241; that stretch reads SRPEEKAEERDQP. The segment covering 1259-1269 has biased composition (acidic residues); sequence EDLEDEIPQFV. An interaction with PTPN13/PTPL1 region spans residues 1266–1269; that stretch reads PQFV.

As to quaternary structure, interacts with PTPN13/PTPL1. Interacts with RAP2A via its coiled coil domain. Interacts with RASIP1.

Its function is as follows. GTPase activator for the Rho-type GTPases by converting them to an inactive GDP-bound state. Has strong activity toward RHOA, and weaker activity toward RAC1 and CDC42. May act as a specific effector of RAP2A to regulate Rho. In concert with RASIP1, suppresses RhoA signaling and dampens ROCK and MYH9 activities in endothelial cells and plays an essential role in blood vessel tubulogenesis. This Bos taurus (Bovine) protein is Rho GTPase-activating protein 29 (ARHGAP29).